The sequence spans 81 residues: Toxin F-VIII (81 aa).

The signal sequence occupies residues 1–21 (MKTLLLTLLVVTIVCLDLAST). 4 cysteine pairs are disulfide-bonded: C24–C43, C38–C60, C62–C73, and C74–C79.

This sequence belongs to the three-finger toxin family. Short-chain subfamily. Orphan group XI sub-subfamily. In terms of tissue distribution, expressed by the venom gland.

The protein localises to the secreted. Is cytotoxic against A549 cells (LC(50)=106 ug/ml). The chain is Toxin F-VIII from Dendroaspis angusticeps (Eastern green mamba).